Here is a 123-residue protein sequence, read N- to C-terminus: Defensin beta 118 (123 aa).

Positions 1-19 are cleaved as a signal peptide; sequence MKLLLLALPMLVLLPQVIP. 3 disulfides stabilise this stretch: C27–C54, C34–C48, and C38–C55. Positions 65 to 123 are excised as a propeptide; it reads VPTTSPTPLSDSTRGVIDDILTVRFTTDYFEVSSKKNMVEESEVGQGTQTSLPNVHHSS. The interval 100 to 123 is disordered; the sequence is KNMVEESEVGQGTQTSLPNVHHSS. The segment covering 109–123 has biased composition (polar residues); the sequence is GQGTQTSLPNVHHSS.

It belongs to the beta-defensin family. In terms of processing, the three-dimensional structure formed by the three intramolecular disulfide bridges is indispensable for antimicrobial activity.

The protein localises to the secreted. Functionally, host defense peptide that exhibits antimicrobial activity against both Gram-negative bacteria, such as E.coli and S.typhimurium, and Gram-positive bacteria, such as S.aureus and B.subtilis. Inhibits cell adhesion of E.coli on intestinal epithelial enterocytes. Causes rapid permeabilization of both the outer and inner membrane of E.coli, leading to morphological alterations on the bacterial surface. Binds to bacterial lipopolysaccharides (LPS) with high affinity, and may thereby be involved in immunoregulation through LPS neutralization. May contribute to epididymal innate immunity and protect the sperm against attack by microorganisms. This is Defensin beta 118 (DEFB118) from Pongo pygmaeus (Bornean orangutan).